A 306-amino-acid polypeptide reads, in one-letter code: Low-density lipoprotein receptor class A domain-containing protein 4 (306 aa).

At 1–64 (MPEAGFQATN…PPGIFNSELE (64 aa)) the chain is on the lumenal side. The LDL-receptor class A domain occupies 11–48 (AFTECKFTCTSGKCLYLGSLVCNQQNDCGDNSDEENCL). Disulfide bonds link C19/C38 and C32/C47. A helical transmembrane segment spans residues 65 to 85 (FAQILIIVVVVTVMVVVVVCL). Topologically, residues 86–306 (LNHYKVSTRS…GKDRKPGDLV (221 aa)) are cytoplasmic. The segment at 100–127 (PNQSQRQEDGLQPEGSLWPSDSSVQRPG) is disordered. Positions 180 to 183 (PPPY) match the PPxY motif 1 motif. The SMAD interaction motif (SIM) signature appears at 208 to 211 (PPNR). The PPxY motif 2 motif lies at 252-255 (PPTY). Residues 268–306 (FHHQHSNTHRGSRPQFQPNNSEGTIVPIKGKDRKPGDLV) are disordered. The span at 269 to 279 (HHQHSNTHRGS) shows a compositional bias: basic residues. Over residues 281–290 (PQFQPNNSEG) the composition is skewed to polar residues. The span at 296–306 (KGKDRKPGDLV) shows a compositional bias: basic and acidic residues.

It belongs to the PMEPA1 family. In terms of assembly, interacts with PMEPA1. Interacts (via the SMAD interaction motif) with SMAD2 and SMAD3. As to expression, detected in all tissues tested.

The protein localises to the early endosome membrane. In terms of biological role, functions as a negative regulator of TGF-beta signaling and thereby probably plays a role in cell proliferation, differentiation, apoptosis, motility, extracellular matrix production and immunosuppression. In the canonical TGF-beta pathway, ZFYVE9/SARA recruits the intracellular signal transducer and transcriptional modulators SMAD2 and SMAD3 to the TGF-beta receptor. Phosphorylated by the receptor, SMAD2 and SMAD3 then form a heteromeric complex with SMAD4 that translocates to the nucleus to regulate transcription. Through interaction with SMAD2 and SMAD3, LDLRAD4 may compete with ZFYVE9 and SMAD4 and prevent propagation of the intracellular signal. In Mus musculus (Mouse), this protein is Low-density lipoprotein receptor class A domain-containing protein 4 (Ldlrad4).